We begin with the raw amino-acid sequence, 113 residues long: Large ribosomal subunit protein eL34 (113 aa).

It belongs to the eukaryotic ribosomal protein eL34 family.

The polypeptide is Large ribosomal subunit protein eL34 (Methanopyrus kandleri (strain AV19 / DSM 6324 / JCM 9639 / NBRC 100938)).